Consider the following 333-residue polypeptide: HTH-type transcriptional regulator Cphy_2742 (333 aa).

The HTH lacI-type domain occupies 1–55 (MNIYDVSQKAGVSIATVSRVINGNPNVSEKTKQKVLDVMKEIGYTPNVFARGLGL). Positions 3–22 (IYDVSQKAGVSIATVSRVIN) form a DNA-binding region, H-T-H motif.

Its subcellular location is the cytoplasm. Functionally, involved in control of pectin and galacturonic acid metabolism. Probably represses a comprehensive set of pectin fermentation genes by binding a conserved palindrome at or downstream of their transcription start site to block transcription. In the presence of galacturonic acid may activate transcription of acetate synthesis and other aspects of carbon metabolism. This chain is HTH-type transcriptional regulator Cphy_2742, found in Lachnoclostridium phytofermentans (strain ATCC 700394 / DSM 18823 / ISDg) (Clostridium phytofermentans).